Consider the following 191-residue polypeptide: Large ribosomal subunit protein bL25 (191 aa).

It belongs to the bacterial ribosomal protein bL25 family. CTC subfamily. As to quaternary structure, part of the 50S ribosomal subunit; part of the 5S rRNA/L5/L18/L25 subcomplex. Contacts the 5S rRNA. Binds to the 5S rRNA independently of L5 and L18.

In terms of biological role, this is one of the proteins that binds to the 5S RNA in the ribosome where it forms part of the central protuberance. The sequence is that of Large ribosomal subunit protein bL25 from Nitratidesulfovibrio vulgaris (strain DSM 19637 / Miyazaki F) (Desulfovibrio vulgaris).